A 258-amino-acid chain; its full sequence is Aspartate/glutamate leucyltransferase (258 aa).

It belongs to the R-transferase family. Bpt subfamily.

The protein localises to the cytoplasm. The catalysed reaction is N-terminal L-glutamyl-[protein] + L-leucyl-tRNA(Leu) = N-terminal L-leucyl-L-glutamyl-[protein] + tRNA(Leu) + H(+). It catalyses the reaction N-terminal L-aspartyl-[protein] + L-leucyl-tRNA(Leu) = N-terminal L-leucyl-L-aspartyl-[protein] + tRNA(Leu) + H(+). In terms of biological role, functions in the N-end rule pathway of protein degradation where it conjugates Leu from its aminoacyl-tRNA to the N-termini of proteins containing an N-terminal aspartate or glutamate. This chain is Aspartate/glutamate leucyltransferase, found in Rhodopseudomonas palustris (strain TIE-1).